We begin with the raw amino-acid sequence, 302 residues long: Bifunctional protein FolD 2 (302 aa).

Residues Gly170–Ser172, Ser195, and Ile236 contribute to the NADP(+) site.

The protein belongs to the tetrahydrofolate dehydrogenase/cyclohydrolase family. In terms of assembly, homodimer.

The catalysed reaction is (6R)-5,10-methylene-5,6,7,8-tetrahydrofolate + NADP(+) = (6R)-5,10-methenyltetrahydrofolate + NADPH. It catalyses the reaction (6R)-5,10-methenyltetrahydrofolate + H2O = (6R)-10-formyltetrahydrofolate + H(+). It functions in the pathway one-carbon metabolism; tetrahydrofolate interconversion. In terms of biological role, catalyzes the oxidation of 5,10-methylenetetrahydrofolate to 5,10-methenyltetrahydrofolate and then the hydrolysis of 5,10-methenyltetrahydrofolate to 10-formyltetrahydrofolate. This Paracoccus denitrificans (strain Pd 1222) protein is Bifunctional protein FolD 2.